The primary structure comprises 545 residues: Chromosomal replication initiator protein DnaA (545 aa).

The tract at residues 1–72 (MNDFWQHCSA…DMARDFWQAP (72 aa)) is domain I, interacts with DnaA modulators. Residues 72 to 208 (PVDVQFVLDP…GETDSMYERS (137 aa)) form a domain II region. Over residues 90 to 105 (AAAPAPASARPASAPG) the composition is skewed to low complexity. Disordered stretches follow at residues 90-112 (AAAP…GSAG) and 181-204 (AAAR…TDSM). The span at 189–201 (PGQSASSNGNGET) shows a compositional bias: polar residues. Residues 209–425 (KLNPVLTFDN…GALRKILAYS (217 aa)) form a domain III, AAA+ region region. The ATP site is built by Gly-253, Gly-255, Lys-256, and Thr-257. Positions 426-545 (KFHGREITIE…LHVLEQTLKG (120 aa)) are domain IV, binds dsDNA.

Belongs to the DnaA family. In terms of assembly, oligomerizes as a right-handed, spiral filament on DNA at oriC.

It localises to the cytoplasm. In terms of biological role, plays an essential role in the initiation and regulation of chromosomal replication. ATP-DnaA binds to the origin of replication (oriC) to initiate formation of the DNA replication initiation complex once per cell cycle. Binds the DnaA box (a 9 base pair repeat at the origin) and separates the double-stranded (ds)DNA. Forms a right-handed helical filament on oriC DNA; dsDNA binds to the exterior of the filament while single-stranded (ss)DNA is stabiized in the filament's interior. The ATP-DnaA-oriC complex binds and stabilizes one strand of the AT-rich DNA unwinding element (DUE), permitting loading of DNA polymerase. After initiation quickly degrades to an ADP-DnaA complex that is not apt for DNA replication. Binds acidic phospholipids. The polypeptide is Chromosomal replication initiator protein DnaA (Paraburkholderia phytofirmans (strain DSM 17436 / LMG 22146 / PsJN) (Burkholderia phytofirmans)).